Here is a 99-residue protein sequence, read N- to C-terminus: Putative membrane protein insertion efficiency factor (99 aa).

This sequence belongs to the UPF0161 family.

The protein resides in the cell membrane. Functionally, could be involved in insertion of integral membrane proteins into the membrane. The sequence is that of Putative membrane protein insertion efficiency factor from Corynebacterium efficiens (strain DSM 44549 / YS-314 / AJ 12310 / JCM 11189 / NBRC 100395).